The following is a 1023-amino-acid chain: Sodium/potassium-transporting ATPase subunit alpha-1 (1023 aa).

The propeptide occupies 1–5 (MGLGK). The span at 1 to 11 (MGLGKGKDEYK) shows a compositional bias: basic and acidic residues. Residues 1-33 (MGLGKGKDEYKLAATSEDGGKKDKKAKAKKDMD) form a disordered region. The Cytoplasmic segment spans residues 6–87 (GKDEYKLAAT…NALTPPPTTP (82 aa)). At serine 16 the chain carries Phosphoserine; by PKC. Positions 82-84 (PPP) are interaction with phosphoinositide-3 kinase. The chain crosses the membrane as a helical span at residues 88-108 (EWVKFCKQLFGGFSMLLWIGA). Topologically, residues 109–131 (ILCFLAYGIQAASEDEPANDNLY) are extracellular. The chain crosses the membrane as a helical span at residues 132–152 (LGIVLSAVVIITGCFSYYQEA). The Cytoplasmic segment spans residues 153-288 (KSSKIMESFK…GGKTPIAIEI (136 aa)). Residues 216–237 (SSLTGESEPQTRSPDFSNENPL) form a disordered region. The chain crosses the membrane as a helical span at residues 289–308 (EHFIHIITGVAVFLGVSFFI). Topologically, residues 309 to 320 (LSLILGYNWLEA) are extracellular. The helical transmembrane segment at 321 to 338 (VIFLIGIIVANVPEGLLA) threads the bilayer. Residues 339-772 (TVTVCLTLTA…EEGRLIFDNL (434 aa)) are Cytoplasmic-facing. The 4-aspartylphosphate intermediate role is filled by aspartate 376. Lysine 487 provides a ligand contact to ATP. Aspartate 717 and aspartate 721 together coordinate Mg(2+). The helical transmembrane segment at 773-792 (KKSIAYTLTSNIPEISPFLL) threads the bilayer. Over 793–802 (FIIANIPLPL) the chain is Extracellular. Residues 803 to 823 (GTVTILCIDLGTDMVPAISLA) traverse the membrane as a helical segment. Over 824-843 (YEKAESDIMKRQPRNPKTDK) the chain is Cytoplasmic. The chain crosses the membrane as a helical span at residues 844 to 866 (LVNERLISIAYGQIGMMQATAGF). Residues 867–918 (FTYFVILAENGFLPMDLIGVRVLWDDKYVNDLEDSYGQQWTYERRKIVEYSC) lie on the Extracellular side of the membrane. The chain crosses the membrane as a helical span at residues 919-938 (HTAFFASIVIVQWADLIICK). Residues 939-951 (TRRNSIVQQGMTN) are Cytoplasmic-facing. Residue serine 943 is modified to Phosphoserine; by PKA. Residues 952 to 970 (RILIFGLFEETALAAFLSY) form a helical membrane-spanning segment. The Extracellular portion of the chain corresponds to 971-985 (CPGMDVALRMYPMKP). Residues 986-1006 (LWWFCAFPYSLLIFLYDEARR) form a helical membrane-spanning segment. Topologically, residues 1007–1023 (YILRRNPGGWVEKETYY) are cytoplasmic.

The protein belongs to the cation transport ATPase (P-type) (TC 3.A.3) family. Type IIC subfamily. The sodium/potassium-transporting ATPase is composed of a catalytic alpha subunit, an auxiliary non-catalytic beta subunit and an additional regulatory subunit.

The protein resides in the cell membrane. It is found in the sarcolemma. It carries out the reaction K(+)(out) + Na(+)(in) + ATP + H2O = K(+)(in) + Na(+)(out) + ADP + phosphate + H(+). Functionally, this is the catalytic component of the active enzyme, which catalyzes the hydrolysis of ATP coupled with the exchange of sodium and potassium ions across the plasma membrane. This action creates the electrochemical gradient of sodium and potassium ions, providing the energy for active transport of various nutrients. This is Sodium/potassium-transporting ATPase subunit alpha-1 (atp1a1) from Oreochromis mossambicus (Mozambique tilapia).